Reading from the N-terminus, the 326-residue chain is N-acetyl-gamma-glutamyl-phosphate reductase (326 aa).

Cysteine 155 is an active-site residue.

This sequence belongs to the NAGSA dehydrogenase family. Type 1 subfamily.

It localises to the cytoplasm. The catalysed reaction is N-acetyl-L-glutamate 5-semialdehyde + phosphate + NADP(+) = N-acetyl-L-glutamyl 5-phosphate + NADPH + H(+). The protein operates within amino-acid biosynthesis; L-arginine biosynthesis; N(2)-acetyl-L-ornithine from L-glutamate: step 3/4. Functionally, catalyzes the NADPH-dependent reduction of N-acetyl-5-glutamyl phosphate to yield N-acetyl-L-glutamate 5-semialdehyde. The polypeptide is N-acetyl-gamma-glutamyl-phosphate reductase (Shewanella baltica (strain OS155 / ATCC BAA-1091)).